The primary structure comprises 140 residues: Putative pre-16S rRNA nuclease (140 aa).

Belongs to the YqgF nuclease family.

It localises to the cytoplasm. Its function is as follows. Could be a nuclease involved in processing of the 5'-end of pre-16S rRNA. The polypeptide is Putative pre-16S rRNA nuclease (Mycoplasma pneumoniae (strain ATCC 29342 / M129 / Subtype 1) (Mycoplasmoides pneumoniae)).